The following is a 266-amino-acid chain: Expansin-A13 (266 aa).

The first 19 residues, 1 to 19, serve as a signal peptide directing secretion; the sequence is MQRFLLPLLFLALSPPAIC. Positions 58–171 constitute an Expansin-like EG45 domain; it reads GGACGYGDLV…RRINCRKEGS (114 aa). The Expansin-like CBD domain occupies 181-260; the sequence is IFISVLITNV…NWNYGQTFEG (80 aa).

Belongs to the expansin family. Expansin A subfamily.

The protein resides in the secreted. The protein localises to the cell wall. It localises to the membrane. Its function is as follows. Causes loosening and extension of plant cell walls by disrupting non-covalent bonding between cellulose microfibrils and matrix glucans. No enzymatic activity has been found. This Arabidopsis thaliana (Mouse-ear cress) protein is Expansin-A13 (EXPA13).